We begin with the raw amino-acid sequence, 405 residues long: MSPTRVLVLNSGSSSVKYQLLDMRDSSRLAVGLVERIGEGTSRLKHTPLTTGVSRELTSPVADHAAALKTVAEELAKDGLGLDSPELAAIGHRVVHGGRSFTEPTVIDDDVLAEIERLIPVAPLHNPANLTGIRTAMALRPDLPQVAVFDTAFHTTMPESAARYAIDVKTADEHRVRRYGFHGTSHAYVSRATAKLLGRAPKDVNLIVLHLGNGASASAVRGGRCVDTSMGLTPLEGLVMGTRSGDMDPAVIFHLMRVGGMSTDEVDTLLNTKSGLIGLCGDNDMREIRRRVDEGDEQAALAFDIYIHRLKKYIGAYYAVLGRVDAVAFTAGVGENAAPVRAAAIAGLEELGLVVDSERNAVRSDEPRIVSPEDARVAVAVVPTDEELEIAQQTYALVGTAHHLT.

A Mg(2+)-binding site is contributed by Asn-10. Lys-17 is an ATP binding site. Arg-93 contacts substrate. The Proton donor/acceptor role is filled by Asp-150. ATP is bound by residues 210-214, 284-286, and 332-336; these read HLGNG, DMR, and GVGEN. A Mg(2+)-binding site is contributed by Glu-386.

This sequence belongs to the acetokinase family. As to quaternary structure, homodimer. It depends on Mg(2+) as a cofactor. Mn(2+) is required as a cofactor.

It localises to the cytoplasm. It carries out the reaction acetate + ATP = acetyl phosphate + ADP. Its pathway is metabolic intermediate biosynthesis; acetyl-CoA biosynthesis; acetyl-CoA from acetate: step 1/2. Its function is as follows. Catalyzes the formation of acetyl phosphate from acetate and ATP. Can also catalyze the reverse reaction. The sequence is that of Acetate kinase from Streptomyces avermitilis (strain ATCC 31267 / DSM 46492 / JCM 5070 / NBRC 14893 / NCIMB 12804 / NRRL 8165 / MA-4680).